Consider the following 599-residue polypeptide: Elongation factor 4 (599 aa).

One can recognise a tr-type G domain in the interval 2–184 (KNIRNFSIIA…RLVRDIPPPE (183 aa)). Residues 14-19 (DHGKST) and 131-134 (NKID) contribute to the GTP site.

The protein belongs to the TRAFAC class translation factor GTPase superfamily. Classic translation factor GTPase family. LepA subfamily.

It is found in the cell inner membrane. It carries out the reaction GTP + H2O = GDP + phosphate + H(+). Functionally, required for accurate and efficient protein synthesis under certain stress conditions. May act as a fidelity factor of the translation reaction, by catalyzing a one-codon backward translocation of tRNAs on improperly translocated ribosomes. Back-translocation proceeds from a post-translocation (POST) complex to a pre-translocation (PRE) complex, thus giving elongation factor G a second chance to translocate the tRNAs correctly. Binds to ribosomes in a GTP-dependent manner. This chain is Elongation factor 4, found in Escherichia coli (strain SE11).